A 420-amino-acid polypeptide reads, in one-letter code: Probable protein phosphatase 2C 73 (420 aa).

Residues 33-336 form the PPM-type phosphatase domain; sequence GVSMHTKQGW…DDCAVVCLFL (304 aa). 2 residues coordinate Mn(2+): aspartate 69 and glycine 70. A compositionally biased stretch (polar residues) spans 96–105; that stretch reads LKTEQDPSSN. Residues 96-119 form a disordered region; that stretch reads LKTEQDPSSNTDKETLEKSDCTSL. Residues 106 to 115 are compositionally biased toward basic and acidic residues; the sequence is TDKETLEKSD. Mn(2+) is bound by residues aspartate 281 and aspartate 327.

This sequence belongs to the PP2C family. Requires Mg(2+) as cofactor. It depends on Mn(2+) as a cofactor.

The catalysed reaction is O-phospho-L-seryl-[protein] + H2O = L-seryl-[protein] + phosphate. It catalyses the reaction O-phospho-L-threonyl-[protein] + H2O = L-threonyl-[protein] + phosphate. This chain is Probable protein phosphatase 2C 73, found in Oryza sativa subsp. japonica (Rice).